Reading from the N-terminus, the 593-residue chain is Cell surface glycoprotein (593 aa).

The N-terminal stretch at 1–22 is a signal peptide; that stretch reads MRKFTLLMLLLIVISMSGIAGA. Asn29, Asn58, Asn66, Asn74, Asn114, Asn122, Asn145, Asn148, Asn158, Asn176, Asn208, Asn231, Asn326, Asn336, Asn340, Asn431, Asn471, Asn500, and Asn516 each carry an N-linked (GalNAc...) asparagine glycan.

In terms of processing, N-glycosylated; contains glycans composed of methyl-Man, Man and GalNAc residues in a molar ratio of 2:3:1.

It is found in the secreted. The protein resides in the cell wall. It localises to the S-layer. In terms of biological role, the S-layer is a paracrystalline mono-layered assembly of proteins which coat the surface of the cell. This chain is Cell surface glycoprotein (slgA), found in Methanothermus fervidus (strain ATCC 43054 / DSM 2088 / JCM 10308 / V24 S).